The primary structure comprises 500 residues: Transcription termination/antitermination protein NusA (500 aa).

Residues 135-205 (GEIVTGVVKK…RGAQLFVTRS (71 aa)) form the S1 motif domain. A KH domain is found at 307 to 373 (KHTMDIAVEA…FTKYLDIDEE (67 aa)). 2 consecutive repeat copies span residues 369–419 (DIDE…KNAL) and 444–494 (GLDR…RNIC). A 2 X 51 AA approximate repeats region spans residues 369 to 494 (DIDEEFATVL…ELIMAARNIC (126 aa)).

The protein belongs to the NusA family. As to quaternary structure, monomer. Binds directly to the core enzyme of the DNA-dependent RNA polymerase and to nascent RNA.

The protein resides in the cytoplasm. Its function is as follows. Participates in both transcription termination and antitermination. In Salmonella typhimurium (strain LT2 / SGSC1412 / ATCC 700720), this protein is Transcription termination/antitermination protein NusA.